Here is a 374-residue protein sequence, read N- to C-terminus: Homoserine O-acetyltransferase (374 aa).

Residues 45-353 (NAILVLHALT…PYGHDAFLIE (309 aa)) form the AB hydrolase-1 domain. The active-site Nucleophile is serine 151. Arginine 220 lines the substrate pocket. Residues aspartate 314 and histidine 347 contribute to the active site. Aspartate 348 contacts substrate.

Belongs to the AB hydrolase superfamily. MetX family. Homodimer.

The protein localises to the cytoplasm. It carries out the reaction L-homoserine + acetyl-CoA = O-acetyl-L-homoserine + CoA. It functions in the pathway amino-acid biosynthesis; L-methionine biosynthesis via de novo pathway; O-acetyl-L-homoserine from L-homoserine: step 1/1. Transfers an acetyl group from acetyl-CoA to L-homoserine, forming acetyl-L-homoserine. This chain is Homoserine O-acetyltransferase, found in Moorella thermoacetica (strain ATCC 39073 / JCM 9320).